The primary structure comprises 452 residues: Chromosomal replication initiator protein DnaA (452 aa).

The segment at 1-72 is domain I, interacts with DnaA modulators; the sequence is MPDMLTLWTD…LVEYAYQAAH (72 aa). The domain II stretch occupies residues 72-114; sequence HEDIQPVLILENERQQQATLKAKTAPVAAGEPVEPTPTFMKET. The interval 115-331 is domain III, AAA+ region; the sequence is ALNSRYTFDT…GALARVQAYS (217 aa). Residues Gly159, Gly161, Lys162, and Thr163 each coordinate ATP. A domain IV, binds dsDNA region spans residues 332–452; the sequence is QLMHQPIATD…IDSLKDDLRR (121 aa).

The protein belongs to the DnaA family. As to quaternary structure, oligomerizes as a right-handed, spiral filament on DNA at oriC.

It is found in the cytoplasm. Plays an essential role in the initiation and regulation of chromosomal replication. ATP-DnaA binds to the origin of replication (oriC) to initiate formation of the DNA replication initiation complex once per cell cycle. Binds the DnaA box (a 9 base pair repeat at the origin) and separates the double-stranded (ds)DNA. Forms a right-handed helical filament on oriC DNA; dsDNA binds to the exterior of the filament while single-stranded (ss)DNA is stabiized in the filament's interior. The ATP-DnaA-oriC complex binds and stabilizes one strand of the AT-rich DNA unwinding element (DUE), permitting loading of DNA polymerase. After initiation quickly degrades to an ADP-DnaA complex that is not apt for DNA replication. Binds acidic phospholipids. In Levilactobacillus brevis (strain ATCC 367 / BCRC 12310 / CIP 105137 / JCM 1170 / LMG 11437 / NCIMB 947 / NCTC 947) (Lactobacillus brevis), this protein is Chromosomal replication initiator protein DnaA.